The sequence spans 371 residues: 4-hydroxy-3-methylbut-2-en-1-yl diphosphate synthase (flavodoxin) (371 aa).

The [4Fe-4S] cluster site is built by C270, C273, C305, and E312.

It belongs to the IspG family. [4Fe-4S] cluster serves as cofactor.

The enzyme catalyses (2E)-4-hydroxy-3-methylbut-2-enyl diphosphate + oxidized [flavodoxin] + H2O + 2 H(+) = 2-C-methyl-D-erythritol 2,4-cyclic diphosphate + reduced [flavodoxin]. Its pathway is isoprenoid biosynthesis; isopentenyl diphosphate biosynthesis via DXP pathway; isopentenyl diphosphate from 1-deoxy-D-xylulose 5-phosphate: step 5/6. Converts 2C-methyl-D-erythritol 2,4-cyclodiphosphate (ME-2,4cPP) into 1-hydroxy-2-methyl-2-(E)-butenyl 4-diphosphate. This chain is 4-hydroxy-3-methylbut-2-en-1-yl diphosphate synthase (flavodoxin), found in Shewanella loihica (strain ATCC BAA-1088 / PV-4).